A 423-amino-acid chain; its full sequence is Serine--tRNA ligase (423 aa).

229-231 contributes to the L-serine binding site; it reads TAE. 260–262 lines the ATP pocket; that stretch reads RKE. Residue Glu283 participates in L-serine binding. ATP is bound at residue 347–350; it reads EVSS. Ser383 contributes to the L-serine binding site.

This sequence belongs to the class-II aminoacyl-tRNA synthetase family. Type-1 seryl-tRNA synthetase subfamily. As to quaternary structure, homodimer. The tRNA molecule binds across the dimer.

Its subcellular location is the cytoplasm. It catalyses the reaction tRNA(Ser) + L-serine + ATP = L-seryl-tRNA(Ser) + AMP + diphosphate + H(+). The catalysed reaction is tRNA(Sec) + L-serine + ATP = L-seryl-tRNA(Sec) + AMP + diphosphate + H(+). Its pathway is aminoacyl-tRNA biosynthesis; selenocysteinyl-tRNA(Sec) biosynthesis; L-seryl-tRNA(Sec) from L-serine and tRNA(Sec): step 1/1. Catalyzes the attachment of serine to tRNA(Ser). Is also able to aminoacylate tRNA(Sec) with serine, to form the misacylated tRNA L-seryl-tRNA(Sec), which will be further converted into selenocysteinyl-tRNA(Sec). The polypeptide is Serine--tRNA ligase (Chloroflexus aurantiacus (strain ATCC 29366 / DSM 635 / J-10-fl)).